Reading from the N-terminus, the 481-residue chain is Tripartite motif-containing protein 10 (481 aa).

The RING-type zinc-finger motif lies at 16–61 (CPICQGTLREPVTIDCGHNFCRACLTRYCEIPGPDLEESPTCPLCK). The segment at 94–135 (GEEDVCQEHGEKIYFFCEDDEMQLCVVCREAGEHATHTMRFL) adopts a B box-type zinc-finger fold. Zn(2+)-binding residues include C99, H102, C121, and H127. Residues 150–177 (LKCLRKEREEIQEIQSRENKRMQVLLTQ) are a coiled coil. Positions 292-481 (REMKMFLEKL…GRGSSFSLSS (190 aa)) constitute a B30.2/SPRY domain.

Belongs to the TRIM/RBCC family. Interacts with IFNAR1; this interaction prevents association of IFNAR1 with TYK2.

It localises to the cytoplasm. E3 ligase that plays an essential role in the differentiation and survival of terminal erythroid cells. May directly bind to PTEN and promote its ubiquitination, resulting in its proteasomal degradation and activation of hypertrophic signaling. In addition, plays a role in immune response regulation by repressing the phosphorylation of STAT1 and STAT2 in the interferon/JAK/STAT signaling pathway independent of its E3 ligase activity. Mechanistically, interacts with the intracellular domain of IFNAR1 and thereby inhibits the association between TYK2 and IFNAR1. The polypeptide is Tripartite motif-containing protein 10 (TRIM10) (Homo sapiens (Human)).